Reading from the N-terminus, the 243-residue chain is Histone H2B.2 (243 aa).

At alanine 2 the chain carries N,N,N-trimethylalanine; alternate. N,N-dimethylalanine; alternate is present on alanine 2. Alanine 2 bears the N-methylalanine; alternate mark. The disordered stretch occupies residues proline 67–aspartate 145. Residues glycine 120–glutamine 132 are compositionally biased toward basic and acidic residues. Positions glutamate 133–lysine 142 are enriched in basic residues.

The protein belongs to the histone H2B family. In terms of assembly, the nucleosome is a histone octamer containing two molecules each of H2A, H2B, H3 and H4 assembled in one H3-H4 heterotetramer and two H2A-H2B heterodimers. The octamer wraps approximately 147 bp of DNA. Can be acetylated to form H2BK6ac.

It localises to the nucleus. Its subcellular location is the chromosome. Its function is as follows. Core component of nucleosome. Nucleosomes wrap and compact DNA into chromatin, limiting DNA accessibility to the cellular machineries which require DNA as a template. Histones thereby play a central role in transcription regulation, DNA repair, DNA replication and chromosomal stability. DNA accessibility is regulated via a complex set of post-translational modifications of histones, also called histone code, and nucleosome remodeling. This chain is Histone H2B.2, found in Arabidopsis thaliana (Mouse-ear cress).